Consider the following 309-residue polypeptide: 4-hydroxy-tetrahydrodipicolinate synthase (309 aa).

Thr51 is a pyruvate binding site. Tyr140 functions as the Proton donor/acceptor in the catalytic mechanism. Lys168 functions as the Schiff-base intermediate with substrate in the catalytic mechanism. Ile209 contributes to the pyruvate binding site.

This sequence belongs to the DapA family. As to quaternary structure, homotetramer; dimer of dimers.

The protein localises to the cytoplasm. The enzyme catalyses L-aspartate 4-semialdehyde + pyruvate = (2S,4S)-4-hydroxy-2,3,4,5-tetrahydrodipicolinate + H2O + H(+). Its pathway is amino-acid biosynthesis; L-lysine biosynthesis via DAP pathway; (S)-tetrahydrodipicolinate from L-aspartate: step 3/4. Its function is as follows. Catalyzes the condensation of (S)-aspartate-beta-semialdehyde [(S)-ASA] and pyruvate to 4-hydroxy-tetrahydrodipicolinate (HTPA). This is 4-hydroxy-tetrahydrodipicolinate synthase from Streptococcus uberis (strain ATCC BAA-854 / 0140J).